The chain runs to 402 residues: CCA-adding enzyme (402 aa).

2 residues coordinate ATP: Gly32 and Arg35. 2 residues coordinate CTP: Gly32 and Arg35. Mg(2+) contacts are provided by Asp45 and Asp47. Positions 116, 159, 162, 165, and 168 each coordinate ATP. 5 residues coordinate CTP: Arg116, Asp159, Arg162, Arg165, and Arg168.

This sequence belongs to the tRNA nucleotidyltransferase/poly(A) polymerase family. Bacterial CCA-adding enzyme type 3 subfamily. As to quaternary structure, homodimer. It depends on Mg(2+) as a cofactor.

The enzyme catalyses a tRNA precursor + 2 CTP + ATP = a tRNA with a 3' CCA end + 3 diphosphate. It carries out the reaction a tRNA with a 3' CCA end + 2 CTP + ATP = a tRNA with a 3' CCACCA end + 3 diphosphate. Its function is as follows. Catalyzes the addition and repair of the essential 3'-terminal CCA sequence in tRNAs without using a nucleic acid template. Adds these three nucleotides in the order of C, C, and A to the tRNA nucleotide-73, using CTP and ATP as substrates and producing inorganic pyrophosphate. tRNA 3'-terminal CCA addition is required both for tRNA processing and repair. Also involved in tRNA surveillance by mediating tandem CCA addition to generate a CCACCA at the 3' terminus of unstable tRNAs. While stable tRNAs receive only 3'-terminal CCA, unstable tRNAs are marked with CCACCA and rapidly degraded. This chain is CCA-adding enzyme, found in Streptococcus pyogenes serotype M3 (strain ATCC BAA-595 / MGAS315).